The primary structure comprises 831 residues: Periplasmic nitrate reductase (831 aa).

Residues 1–29 constitute a signal peptide (tat-type signal); sequence MTVTRRDFVRHQALATAAAAAGVAVPAAA. The region spanning 41-97 is the 4Fe-4S Mo/W bis-MGD-type domain; the sequence is LVWSKAPCRFCGTGCSVNVATKEGRVVATHGDIKSPVNRGLNCVKGYFLSKVMYGED. 4 residues coordinate [4Fe-4S] cluster: Cys48, Cys51, Cys55, and Cys83. Residues Lys85, Gln152, Asn177, Cys181, 214 to 221, 245 to 249, 264 to 266, Met375, Gln379, Asn485, 511 to 512, Lys534, Asp561, and 721 to 730 contribute to the Mo-bis(molybdopterin guanine dinucleotide) site; these read WGSNMAEM, STYEH, QSD, SD, and TGRVIEHWHS. A substrate-binding site is contributed by Trp797. Positions 805 and 822 each coordinate Mo-bis(molybdopterin guanine dinucleotide).

This sequence belongs to the prokaryotic molybdopterin-containing oxidoreductase family. NasA/NapA/NarB subfamily. Component of the periplasmic nitrate reductase NapAB complex composed of NapA and NapB. The cofactor is [4Fe-4S] cluster. Mo-bis(molybdopterin guanine dinucleotide) serves as cofactor. Predicted to be exported by the Tat system. The position of the signal peptide cleavage has not been experimentally proven.

It localises to the periplasm. The enzyme catalyses 2 Fe(II)-[cytochrome] + nitrate + 2 H(+) = 2 Fe(III)-[cytochrome] + nitrite + H2O. Functionally, catalytic subunit of the periplasmic nitrate reductase complex NapAB. Receives electrons from NapB and catalyzes the reduction of nitrate to nitrite. The chain is Periplasmic nitrate reductase from Saccharophagus degradans (strain 2-40 / ATCC 43961 / DSM 17024).